The following is a 485-amino-acid chain: Homeobox protein unplugged (485 aa).

3 disordered regions span residues 1 to 65 (MERP…QEQE), 114 to 157 (PAGH…DTRF), and 212 to 325 (GMAQ…RRTA). The span at 54 to 64 (RDQEQEAEQEQ) shows a compositional bias: acidic residues. Low complexity predominate over residues 114 to 128 (PAGHPAAQQPQAQAQ). Composition is skewed to polar residues over residues 223 to 234 (QAHSSPAKSGSH) and 254 to 267 (DSCSDISLTMSPRN). Over residues 284 to 293 (DSEDCSDDEG) the composition is skewed to acidic residues. Residues 308–317 (SQGNGSSSNS) are compositionally biased toward low complexity. Positions 319–378 (SRRRRTAFTSEQLLELEREFHAKKYLSLTERSQIATSLKLSEVQVKIWFQNRRAKWKRVK) form a DNA-binding region, homeobox.

Expressed in the neuroectodermal and mesectodermal cells at the ventral midline of stage 8 embryos, Subsequently, expression domains in the CNS widen and have their most anterior border in the posterior deutocerebrum. Oc/otd and unpg are mutual repressors at the interface of their brain-specific expression domains. Expression fades during germ band retraction and is then restricted to subset of cells by stage 14. Expressed in the founder cells of the cerebral branch within the first tracheal metamere. Outside the CNS, expression is seen in two clusters of ectodermal cells located laterally within the labial and first thoracic segments of stage 9 embryos. By stage 13, the expression is detected in a few cells close to the dorsal midline of the embryos.

It localises to the nucleus. Plays a regulatory role in neural branching of the tracheae: segment-specific aspects of these neural branching patterns appear to be generated by homeotic regulation of expression. May have a role with oc/otd in the postembryonic development of the brain. This chain is Homeobox protein unplugged, found in Drosophila melanogaster (Fruit fly).